The primary structure comprises 156 residues: Cyanate hydratase (156 aa).

Residues arginine 96, glutamate 99, and serine 122 contribute to the active site.

The protein belongs to the cyanase family.

The catalysed reaction is cyanate + hydrogencarbonate + 3 H(+) = NH4(+) + 2 CO2. Its function is as follows. Catalyzes the reaction of cyanate with bicarbonate to produce ammonia and carbon dioxide. This chain is Cyanate hydratase, found in Pseudomonas putida (strain W619).